We begin with the raw amino-acid sequence, 601 residues long: Glutathione-regulated potassium-efflux system protein KefB (601 aa).

13 consecutive transmembrane segments (helical) span residues 4-24 (SDFL…VPLA), 29-49 (IGAV…GLGF), 55-75 (EILH…GLEL), 87-107 (IFGV…GLLM), 115-135 (AAVV…LQLM), 152-172 (VLLF…LLAG), 177-197 (HFDW…LIGG), 207-227 (FIAA…LVLG), 230-250 (LFMD…GVLL), 268-288 (GLLL…GVLY), 291-311 (LLWV…VLYL), 324-344 (MQFA…FSTA), and 356-376 (ALLL…MKLV). The RCK N-terminal domain maps to 400–519 (KPQVIVVGFG…AGVTQFSRET (120 aa)).

The protein belongs to the monovalent cation:proton antiporter 2 (CPA2) transporter (TC 2.A.37) family. KefB subfamily. As to quaternary structure, interacts with the regulatory subunit KefG.

Its subcellular location is the cell inner membrane. In terms of biological role, pore-forming subunit of a potassium efflux system that confers protection against electrophiles. Catalyzes K(+)/H(+) antiport. This is Glutathione-regulated potassium-efflux system protein KefB from Escherichia coli (strain ATCC 8739 / DSM 1576 / NBRC 3972 / NCIMB 8545 / WDCM 00012 / Crooks).